The sequence spans 140 residues: Immunity protein RhsIC (140 aa).

Its function is as follows. Putative immunity protein component of a toxin-immunity protein module, which may function as a cellular contact-dependent growth inhibition (CDI) system. Blocks the toxic effects of expression of the C-terminus (residues 1519-1658) of cognate toxin RhsC in E.coli. This chain is Immunity protein RhsIC (rhsIC), found in Dickeya dadantii (strain 3937) (Erwinia chrysanthemi (strain 3937)).